The chain runs to 265 residues: MSDIIIAFILGIVEGLAEFLPISSTGHLILVGHLLGFEGERAKTFEIVIQLGAILAIAILYHKRLVSLCNIKPLLRKEKKFNAFHVFLGVFPAVVAGLLLHDVIKTYLFQPYTVVIGLVAGAILMIFAEVKKQEATSYSLDDLTYRQALTIGLFQCLAVYPGFSRAGSTISGGLLAKVNYKTASEFSFLIALPVMVGATGLDLLKSWTYLSVDDIPMFAVGFITSFIVAMLAVVTFLKLLEKIGLKPFAYYRILLAILFTVFVLL.

7 helical membrane passes run 4–24 (IIIA…PISS), 42–62 (AKTF…ILYH), 84–104 (FHVF…HDVI), 108–128 (LFQP…MIFA), 184–204 (SEFS…LDLL), 217–237 (MFAV…VTFL), and 245–265 (LKPF…FVLL).

Belongs to the UppP family.

It is found in the cell membrane. It carries out the reaction di-trans,octa-cis-undecaprenyl diphosphate + H2O = di-trans,octa-cis-undecaprenyl phosphate + phosphate + H(+). Functionally, catalyzes the dephosphorylation of undecaprenyl diphosphate (UPP). Confers resistance to bacitracin. This chain is Undecaprenyl-diphosphatase 1, found in Bacillus thuringiensis (strain Al Hakam).